The primary structure comprises 648 residues: Acyl-CoA-binding domain-containing protein 5 (648 aa).

The region spanning Y13–P107 is the ACB domain. An acyl-CoA-binding positions include K34, Y49–Q53, and K75. Kelch repeat units lie at residues K196–H244, Q256–K306, S307–E357, Y359–E408, N409–S457, and I464–N509. S517 carries the post-translational modification Phosphoserine. The stretch at K520–S632 forms a coiled coil. A compositionally biased stretch (polar residues) spans T625–G634. A disordered region spans residues T625–T648.

This sequence belongs to the ACBP family. In terms of tissue distribution, expressed in roots, stems, leaves, flowers and siliques.

It localises to the cytoplasm. In terms of biological role, binds medium- and long-chain acyl-CoA esters with very high affinity. Can interact in vitro with oleoyl-CoA, barely with palmitoyl-CoA, but not with arachidonyl-CoA. May function as an intracellular carrier of acyl-CoA esters. This Arabidopsis thaliana (Mouse-ear cress) protein is Acyl-CoA-binding domain-containing protein 5 (ACBP5).